The sequence spans 456 residues: 26S proteasome non-ATPase regulatory subunit 12 (456 aa).

An N-acetylalanine modification is found at alanine 2. Lysine 92 is covalently cross-linked (Glycyl lysine isopeptide (Lys-Gly) (interchain with G-Cter in SUMO1); alternate). A Glycyl lysine isopeptide (Lys-Gly) (interchain with G-Cter in SUMO2); alternate cross-link involves residue lysine 92. N6-acetyllysine occurs at positions 221 and 368. A PCI domain is found at 242–420 (SICKHYRAIY…GIINFQRPKD (179 aa)).

It belongs to the proteasome subunit p55 family. In terms of assembly, component of the 19S proteasome regulatory particle complex. The 26S proteasome consists of a 20S core particle (CP) and two 19S regulatory subunits (RP). The regulatory particle is made of a lid composed of 9 subunits including PSMD12, a base containing 6 ATPases and few additional components. Interacts with ERCC6.

In terms of biological role, component of the 26S proteasome, a multiprotein complex involved in the ATP-dependent degradation of ubiquitinated proteins. This complex plays a key role in the maintenance of protein homeostasis by removing misfolded or damaged proteins, which could impair cellular functions, and by removing proteins whose functions are no longer required. Therefore, the proteasome participates in numerous cellular processes, including cell cycle progression, apoptosis, or DNA damage repair. The sequence is that of 26S proteasome non-ATPase regulatory subunit 12 (PSMD12) from Pongo abelii (Sumatran orangutan).